We begin with the raw amino-acid sequence, 537 residues long: MRLAYWIYEGTAHHGIGRIANSLKGVHAVFHAPLGDDYVNVIHTMLERTPNFPRATTSVVTGRDLAQGTNRLPDTLRQVEERFKPELIIVSASCSTTLLQENLQLIVGNANIDTEVFIYEVNPFRVQETEAAEGLFTALVKKYAEKQDLTEEPSINIIGPASLGFHVRSDVTSLRRMMATLGVKINVVAPYSAGLADLKKLPAAWLNVVPYQELGHGAAEHLEEKFGMSSMYDTPLGIQPTMKWLNELIEKLNAIGAKNGKSSNLKMPPLTAFSFDGMSAPSGVPWFTHSADMESFSMKRAFVFGDATRTVAMVKFLRDELGMEICGAGTYLHKHAAWVREQLAGYLPDDLIVTEEFQEIAKRIEADMPDLVCGTQMERHSCRKVDVPCMVTSAPTHIENHLLGYYPMLGFDGADVIADRVYTTSKLGLEKHLIDFFGDAGLEYEEEQQEKVAEPALATAGETAGQATEAATAPATPGAPLTGEPVWAADGEAMLKKIPFFVRKKAKLNTETFAKENGYATITAEVVRLTKESLGGG.

Aspartate 36 is a [4Fe-4S] cluster binding site. Aspartate 292 acts as the Proton donor in catalysis. Residue 428-429 (GL) participates in substrate binding. The disordered stretch occupies residues 459-483 (TAGETAGQATEAATAPATPGAPLTG).

Belongs to the ChlB/BchB/BchZ family. Protochlorophyllide reductase is composed of three subunits; BchL, BchN and BchB. Forms a heterotetramer of two BchB and two BchN subunits. [4Fe-4S] cluster serves as cofactor.

The enzyme catalyses chlorophyllide a + oxidized 2[4Fe-4S]-[ferredoxin] + 2 ADP + 2 phosphate = protochlorophyllide a + reduced 2[4Fe-4S]-[ferredoxin] + 2 ATP + 2 H2O. It functions in the pathway porphyrin-containing compound metabolism; bacteriochlorophyll biosynthesis (light-independent). In terms of biological role, component of the dark-operative protochlorophyllide reductase (DPOR) that uses Mg-ATP and reduced ferredoxin to reduce ring D of protochlorophyllide (Pchlide) to form chlorophyllide a (Chlide). This reaction is light-independent. The NB-protein (BchN-BchB) is the catalytic component of the complex. The protein is Light-independent protochlorophyllide reductase subunit B of Chloroherpeton thalassium (strain ATCC 35110 / GB-78).